The sequence spans 401 residues: Enoyl-[acyl-carrier-protein] reductase [NADH] (401 aa).

NAD(+) is bound by residues 48–53 (GASSGY), 74–75 (FE), 111–112 (DA), and 140–141 (LA). A substrate-binding site is contributed by tyrosine 226. The active-site Proton donor is tyrosine 236. NAD(+) contacts are provided by residues lysine 245 and 274-276 (VVT).

This sequence belongs to the TER reductase family. In terms of assembly, monomer.

The catalysed reaction is a 2,3-saturated acyl-[ACP] + NAD(+) = a (2E)-enoyl-[ACP] + NADH + H(+). It functions in the pathway lipid metabolism; fatty acid biosynthesis. Its function is as follows. Involved in the final reduction of the elongation cycle of fatty acid synthesis (FAS II). Catalyzes the reduction of a carbon-carbon double bond in an enoyl moiety that is covalently linked to an acyl carrier protein (ACP). The chain is Enoyl-[acyl-carrier-protein] reductase [NADH] from Xylella fastidiosa (strain Temecula1 / ATCC 700964).